The primary structure comprises 357 residues: Peptide chain release factor 1 (357 aa).

N5-methylglutamine is present on Gln233.

The protein belongs to the prokaryotic/mitochondrial release factor family. In terms of processing, methylated by PrmC. Methylation increases the termination efficiency of RF1.

The protein resides in the cytoplasm. Functionally, peptide chain release factor 1 directs the termination of translation in response to the peptide chain termination codons UAG and UAA. This is Peptide chain release factor 1 from Enterococcus faecalis (strain ATCC 700802 / V583).